The primary structure comprises 460 residues: Arginine biosynthesis bifunctional protein ArgJ, chloroplastic (460 aa).

A chloroplast-targeting transit peptide spans 1–26; it reads MYLSVPHYPSLKFTAFQSHKRNFRVF. Residues Thr202, Lys228, Thr239, Glu328, Asn455, and Thr460 each contribute to the substrate site. Residue Thr239 is the Nucleophile of the active site.

The protein belongs to the ArgJ family. In terms of assembly, heterodimer of an alpha and a beta chain.

It localises to the plastid. Its subcellular location is the chloroplast. The catalysed reaction is N(2)-acetyl-L-ornithine + L-glutamate = N-acetyl-L-glutamate + L-ornithine. It carries out the reaction L-glutamate + acetyl-CoA = N-acetyl-L-glutamate + CoA + H(+). It participates in amino-acid biosynthesis; L-arginine biosynthesis; L-ornithine and N-acetyl-L-glutamate from L-glutamate and N(2)-acetyl-L-ornithine (cyclic): step 1/1. It functions in the pathway amino-acid biosynthesis; L-arginine biosynthesis; N(2)-acetyl-L-ornithine from L-glutamate: step 1/4. Its function is as follows. Catalyzes two activities which are involved in the cyclic version of arginine biosynthesis: the synthesis of acetylglutamate from glutamate and acetyl-CoA, and of ornithine by transacetylation between acetylornithine and glutamate. The protein is Arginine biosynthesis bifunctional protein ArgJ, chloroplastic of Citrullus lanatus (Watermelon).